The sequence spans 259 residues: 3-deoxy-manno-octulosonate cytidylyltransferase (259 aa).

Belongs to the KdsB family.

It localises to the cytoplasm. The enzyme catalyses 3-deoxy-alpha-D-manno-oct-2-ulosonate + CTP = CMP-3-deoxy-beta-D-manno-octulosonate + diphosphate. Its pathway is nucleotide-sugar biosynthesis; CMP-3-deoxy-D-manno-octulosonate biosynthesis; CMP-3-deoxy-D-manno-octulosonate from 3-deoxy-D-manno-octulosonate and CTP: step 1/1. The protein operates within bacterial outer membrane biogenesis; lipopolysaccharide biosynthesis. In terms of biological role, activates KDO (a required 8-carbon sugar) for incorporation into bacterial lipopolysaccharide in Gram-negative bacteria. The polypeptide is 3-deoxy-manno-octulosonate cytidylyltransferase (Xanthomonas euvesicatoria pv. vesicatoria (strain 85-10) (Xanthomonas campestris pv. vesicatoria)).